Here is a 359-residue protein sequence, read N- to C-terminus: Peptide chain release factor 1 (359 aa).

N5-methylglutamine is present on Gln-236. The tract at residues 288 to 308 (QDEQDAERKSTIGTGDRSERI) is disordered. The span at 293-308 (AERKSTIGTGDRSERI) shows a compositional bias: basic and acidic residues.

Belongs to the prokaryotic/mitochondrial release factor family. Post-translationally, methylated by PrmC. Methylation increases the termination efficiency of RF1.

Its subcellular location is the cytoplasm. Peptide chain release factor 1 directs the termination of translation in response to the peptide chain termination codons UAG and UAA. This Streptococcus uberis (strain ATCC BAA-854 / 0140J) protein is Peptide chain release factor 1.